The primary structure comprises 154 residues: Ribosome maturation factor RimP (154 aa).

Belongs to the RimP family.

The protein resides in the cytoplasm. Its function is as follows. Required for maturation of 30S ribosomal subunits. In Yersinia pseudotuberculosis serotype O:1b (strain IP 31758), this protein is Ribosome maturation factor RimP.